Reading from the N-terminus, the 250-residue chain is Prolactin-7A2 (250 aa).

The N-terminal stretch at 1–29 (MQLSFSRPRPWTLLLMVVSNLLLWENVSS) is a signal peptide. Residues Asn26, Asn35, Asn102, and Asn134 are each glycosylated (N-linked (GlcNAc...) asparagine). 2 disulfide bridges follow: Cys100–Cys215 and Cys232–Cys241.

Belongs to the somatotropin/prolactin family. Expression restricted to placental tissues. Trophoblast giant cells are found to be the major source.

The protein localises to the secreted. This Rattus norvegicus (Rat) protein is Prolactin-7A2 (Prl7a2).